The primary structure comprises 456 residues: 3-isopropylmalate dehydratase large subunit (456 aa).

[4Fe-4S] cluster is bound by residues Cys-336, Cys-396, and Cys-399.

The protein belongs to the aconitase/IPM isomerase family. LeuC type 1 subfamily. Heterodimer of LeuC and LeuD. [4Fe-4S] cluster serves as cofactor.

It catalyses the reaction (2R,3S)-3-isopropylmalate = (2S)-2-isopropylmalate. Its pathway is amino-acid biosynthesis; L-leucine biosynthesis; L-leucine from 3-methyl-2-oxobutanoate: step 2/4. Catalyzes the isomerization between 2-isopropylmalate and 3-isopropylmalate, via the formation of 2-isopropylmaleate. The polypeptide is 3-isopropylmalate dehydratase large subunit (Staphylococcus epidermidis (strain ATCC 35984 / DSM 28319 / BCRC 17069 / CCUG 31568 / BM 3577 / RP62A)).